Consider the following 576-residue polypeptide: Proline--tRNA ligase (576 aa).

It belongs to the class-II aminoacyl-tRNA synthetase family. ProS type 1 subfamily. Homodimer.

Its subcellular location is the cytoplasm. It catalyses the reaction tRNA(Pro) + L-proline + ATP = L-prolyl-tRNA(Pro) + AMP + diphosphate. Its function is as follows. Catalyzes the attachment of proline to tRNA(Pro) in a two-step reaction: proline is first activated by ATP to form Pro-AMP and then transferred to the acceptor end of tRNA(Pro). As ProRS can inadvertently accommodate and process non-cognate amino acids such as alanine and cysteine, to avoid such errors it has two additional distinct editing activities against alanine. One activity is designated as 'pretransfer' editing and involves the tRNA(Pro)-independent hydrolysis of activated Ala-AMP. The other activity is designated 'posttransfer' editing and involves deacylation of mischarged Ala-tRNA(Pro). The misacylated Cys-tRNA(Pro) is not edited by ProRS. This is Proline--tRNA ligase from Leptospira borgpetersenii serovar Hardjo-bovis (strain JB197).